A 320-amino-acid polypeptide reads, in one-letter code: Lipoyl synthase (320 aa).

The disordered stretch occupies residues 1–27 (MRVEIDHRNSGGGKLRHPEKQHRPDNP). Basic and acidic residues predominate over residues 16-25 (RHPEKQHRPD). C61, C66, C72, C87, C91, C94, and S300 together coordinate [4Fe-4S] cluster. The Radical SAM core domain occupies 73–289 (WSQRHATMMI…AAMARAKGFL (217 aa)).

It belongs to the radical SAM superfamily. Lipoyl synthase family. [4Fe-4S] cluster serves as cofactor.

The protein resides in the cytoplasm. It catalyses the reaction [[Fe-S] cluster scaffold protein carrying a second [4Fe-4S](2+) cluster] + N(6)-octanoyl-L-lysyl-[protein] + 2 oxidized [2Fe-2S]-[ferredoxin] + 2 S-adenosyl-L-methionine + 4 H(+) = [[Fe-S] cluster scaffold protein] + N(6)-[(R)-dihydrolipoyl]-L-lysyl-[protein] + 4 Fe(3+) + 2 hydrogen sulfide + 2 5'-deoxyadenosine + 2 L-methionine + 2 reduced [2Fe-2S]-[ferredoxin]. It functions in the pathway protein modification; protein lipoylation via endogenous pathway; protein N(6)-(lipoyl)lysine from octanoyl-[acyl-carrier-protein]: step 2/2. Functionally, catalyzes the radical-mediated insertion of two sulfur atoms into the C-6 and C-8 positions of the octanoyl moiety bound to the lipoyl domains of lipoate-dependent enzymes, thereby converting the octanoylated domains into lipoylated derivatives. The protein is Lipoyl synthase of Acidiphilium cryptum (strain JF-5).